The primary structure comprises 270 residues: Transcription factor PU.1 (270 aa).

Residues 124–162 (LSPAQPSSDEEEGERQSPPLEVSDGEADGLEPGPGLLHG) are disordered. Phosphoserine occurs at positions 140 and 146. The span at 153 to 162 (LEPGPGLLHG) shows a compositional bias: low complexity. The ETS DNA-binding region spans 170-253 (IRLYQFLLDL…VKKKLTYQFS (84 aa)). Positions 217, 230, 233, and 243 each coordinate DNA.

The protein belongs to the ETS family. As to quaternary structure, binds DNA as a monomer. Can form homomers. Directly interacts with CEBPD/NF-IL6-beta; this interaction does not affect DNA-binding properties of each partner. Interacts with NONO/p54(nrb). Interacts with RUNX1/AML1. Interacts with GFI1; the interaction represses SPI1 transcriptional activity, hence blocks SPI1-induced macrophage differentiation of myeloid progenitor cells. Interacts with CEBPE. Interacts with IRF4/Pip and IRF8. Interacts with JUN. Interacts with RB1. Interacts with TBP.

The protein localises to the nucleus. Its activity is regulated as follows. Transcriptional activity at macrophage-specific genes is inhibited by interaction with GFI1, which results in the inhibition of SPI1-induced macrophage differentiation of myeloid progenitor cells, but not that of the granulocyte lineage. Functionally, pioneer transcription factor, which controls hematopoietic cell fate by decompacting stem cell heterochromatin and allowing other transcription factors to enter otherwise inaccessible genomic sites. Once in open chromatin, can directly control gene expression by binding genetic regulatory elements and can also more broadly influence transcription by recruiting transcription factors, such as interferon regulatory factors (IRFs), to otherwise inaccessible genomic regions. Transcriptionally activates genes important for myeloid and lymphoid lineages, such as CSF1R. Transcriptional activation from certain promoters, possibly containing low affinity binding sites, is achieved cooperatively with other transcription factors. FCER1A transactivation is achieved in cooperation with GATA1. May be particularly important for the pro- to pre-B cell transition. Binds (via the ETS domain) onto the purine-rich DNA core sequence 5'-GAGGAA-3', also known as the PU-box. In vitro can bind RNA and interfere with pre-mRNA splicing. This is Transcription factor PU.1 (SPI1) from Sus scrofa (Pig).